A 159-amino-acid chain; its full sequence is Lipoprotein signal peptidase (159 aa).

Helical transmembrane passes span 64 to 84 and 89 to 109; these read SVQW…IWVV and PPFW…GNGI. Residues D119 and D135 contribute to the active site. A helical membrane pass occupies residues 130-150; sequence IFNPADIAINLAVLCFLVDLW.

This sequence belongs to the peptidase A8 family.

The protein resides in the cell inner membrane. The enzyme catalyses Release of signal peptides from bacterial membrane prolipoproteins. Hydrolyzes -Xaa-Yaa-Zaa-|-(S,diacylglyceryl)Cys-, in which Xaa is hydrophobic (preferably Leu), and Yaa (Ala or Ser) and Zaa (Gly or Ala) have small, neutral side chains.. It functions in the pathway protein modification; lipoprotein biosynthesis (signal peptide cleavage). Its function is as follows. This protein specifically catalyzes the removal of signal peptides from prolipoproteins. The protein is Lipoprotein signal peptidase of Parasynechococcus marenigrum (strain WH8102).